Reading from the N-terminus, the 333-residue chain is CRISPR-associated endonuclease Cas1 (333 aa).

Residues E162, H226, and E241 each coordinate Mn(2+).

Belongs to the CRISPR-associated endonuclease Cas1 family. As to quaternary structure, homodimer, forms a heterotetramer with a Cas2 homodimer. The cofactor is Mg(2+). Requires Mn(2+) as cofactor.

In terms of biological role, CRISPR (clustered regularly interspaced short palindromic repeat), is an adaptive immune system that provides protection against mobile genetic elements (viruses, transposable elements and conjugative plasmids). CRISPR clusters contain spacers, sequences complementary to antecedent mobile elements, and target invading nucleic acids. CRISPR clusters are transcribed and processed into CRISPR RNA (crRNA). Acts as a dsDNA endonuclease. Involved in the integration of spacer DNA into the CRISPR cassette. This is CRISPR-associated endonuclease Cas1 from Nanoarchaeum equitans (strain Kin4-M).